A 361-amino-acid polypeptide reads, in one-letter code: Phosphoserine aminotransferase (361 aa).

Position 42 (Arg42) interacts with L-glutamate. Pyridoxal 5'-phosphate-binding positions include 76–77 (AT), Trp102, Thr152, Asp172, and Gln195. Lys196 bears the N6-(pyridoxal phosphate)lysine mark. 237–238 (NT) lines the pyridoxal 5'-phosphate pocket.

The protein belongs to the class-V pyridoxal-phosphate-dependent aminotransferase family. SerC subfamily. In terms of assembly, homodimer. The cofactor is pyridoxal 5'-phosphate.

It localises to the cytoplasm. The catalysed reaction is O-phospho-L-serine + 2-oxoglutarate = 3-phosphooxypyruvate + L-glutamate. It catalyses the reaction 4-(phosphooxy)-L-threonine + 2-oxoglutarate = (R)-3-hydroxy-2-oxo-4-phosphooxybutanoate + L-glutamate. It participates in amino-acid biosynthesis; L-serine biosynthesis; L-serine from 3-phospho-D-glycerate: step 2/3. Its pathway is cofactor biosynthesis; pyridoxine 5'-phosphate biosynthesis; pyridoxine 5'-phosphate from D-erythrose 4-phosphate: step 3/5. Functionally, catalyzes the reversible conversion of 3-phosphohydroxypyruvate to phosphoserine and of 3-hydroxy-2-oxo-4-phosphonooxybutanoate to phosphohydroxythreonine. The polypeptide is Phosphoserine aminotransferase (Xanthomonas campestris pv. campestris (strain 8004)).